The sequence spans 228 residues: Vesicle transport protein SEC20 (228 aa).

The Cytoplasmic portion of the chain corresponds to Met-1–Leu-199. Residues Leu-37 to Ser-90 adopt a coiled-coil conformation. A helical; Anchor for type IV membrane protein membrane pass occupies residues Thr-200–Val-220. Residues Lys-221–Leu-228 are Lumenal-facing.

It belongs to the SEC20 family. In terms of assembly, component of a SNARE complex consisting of STX18, USE1L, BNIP1/SEC20L and SEC22B. Interacts directly with STX18, RINT1/TIP20L and NAPA. Interacts with ZW10 through RINT1. Interacts with BCL2. Interacts with RNF186. Interacts with RNF185. Interacts with SQSTM1; increased by 'Lys-63'-linked polyubiquitination of BNIP1. In terms of processing, polyubiquitinated. 'Lys-63'-linked polyubiquitination by RNF185 increases the interaction with the autophagy receptor SQSTM1. Undergoes 'Lys-29'- and 'Lys-63'-linked polyubiquitination by RNF186 that may regulate BNIP1 localization to the mitochondrion.

It is found in the endoplasmic reticulum membrane. The protein resides in the mitochondrion membrane. Its function is as follows. As part of a SNARE complex may be involved in endoplasmic reticulum membranes fusion and be required for the maintenance of endoplasmic reticulum organization. Also plays a role in apoptosis. It is for instance required for endoplasmic reticulum stress-induced apoptosis. As a substrate of RNF185 interacting with SQSTM1, might also be involved in mitochondrial autophagy. This is Vesicle transport protein SEC20 from Rattus norvegicus (Rat).